We begin with the raw amino-acid sequence, 300 residues long: Mitochondrial GTP/GDP carrier protein 1 (300 aa).

Solcar repeat units follow at residues 8 to 108 (QSGL…KKDF), 117 to 198 (GKAM…AKEY), and 208 to 293 (ATWS…LIPR). A run of 6 helical transmembrane segments spans residues 14–34 (LLGSASAGIMEIAVFHPVDTI), 85–101 (QRVYKYGGQPFANEFLN), 122–142 (SAAAGSLIGIGEIVLLPLDVL), 173–189 (GWGWTAARNAPGSFALF), 214–234 (FISSIVGACSSLIVSAPLDVI), and 268–285 (GLTPKLLTTGPKLVFSFA).

The protein belongs to the mitochondrial carrier (TC 2.A.29) family.

Its subcellular location is the mitochondrion inner membrane. In terms of biological role, mitochondrial GTP/GDP transporter required for GTP uptake and GDP exit from mitochondria. Involved in mitochondrial iron transport and essential for mitochondrial genome maintenance. This chain is Mitochondrial GTP/GDP carrier protein 1 (GGC1), found in Saccharomyces cerevisiae (strain ATCC 204508 / S288c) (Baker's yeast).